The following is a 352-amino-acid chain: Ion-translocating oxidoreductase complex subunit D (352 aa).

Transmembrane regions (helical) follow at residues 20–40 (IMLL…WFFG), 42–62 (GTLF…AIVL), 69–91 (VASH…SIPP), and 123–143 (PAMI…TSWL). FMN phosphoryl threonine is present on Thr-187. Transmembrane regions (helical) follow at residues 215 to 235 (LAGV…VFLL), 242 to 262 (WHIP…GWLF), 267 to 287 (LASP…FFIL), 301 to 321 (LIFG…GGYP), and 322 to 342 (DGVA…DYYT).

This sequence belongs to the NqrB/RnfD family. In terms of assembly, the complex is composed of six subunits: RsxA, RsxB, RsxC, RsxD, RsxE and RsxG. Requires FMN as cofactor.

The protein localises to the cell inner membrane. Functionally, part of a membrane-bound complex that couples electron transfer with translocation of ions across the membrane. Required to maintain the reduced state of SoxR. The chain is Ion-translocating oxidoreductase complex subunit D from Salmonella paratyphi B (strain ATCC BAA-1250 / SPB7).